We begin with the raw amino-acid sequence, 426 residues long: C2H2 type master regulator of conidiophore development brlA (426 aa).

Disordered stretches follow at residues 25 to 71 (CPSM…DRGT) and 281 to 302 (GVRLQRQPSRKMARKQPSKQSL). Residues 30–44 (SSFSPLESPTPTPTS) show a composition bias toward low complexity. Polar residues predominate over residues 45–58 (IYSQGSLASPSWPE). Basic residues predominate over residues 288–297 (PSRKMARKQP). C2H2-type zinc fingers lie at residues 316–340 (FKCKEPGCKGRFKRQEHLKRHMKSH) and 346–371 (HVCWVPGCHRAFSRSDNLNAHYTKTH). The interval 384-426 (LDETSPDYNPDYRGPLTADGRPMPGGTLDESMPSREISMEWDE) is disordered.

It localises to the nucleus. Its function is as follows. BrlA, abaA and wetA are pivotal regulators of conidiophore development and conidium maturation. They act individually and together to regulate their own expression and that of numerous other sporulation-specific genes. Binds promoters of target genes at brlA response elements (BREs) containing the conserved sequence 5'-(C/A)(A/G)AGGG(G/A)-3'. Positively regulates expression of the gliotoxin biosynthetic gene cluster in actively growing vegetative cells, and likely bridges morphological and chemical development during the life-cycle. Regulates (directly or indirectly) the ergot cluster genes. Positively regulates expression of the fumiquinazoline C biosynthetic gene cluster. Positively regulates expression of the melanin biosynthetic gene cluster. Mediates repression of ribosomal protein gene expression in response to nitrogen depletion. The sequence is that of C2H2 type master regulator of conidiophore development brlA from Aspergillus fumigatus (strain ATCC MYA-4609 / CBS 101355 / FGSC A1100 / Af293) (Neosartorya fumigata).